The primary structure comprises 668 residues: UvrABC system protein B (668 aa).

Positions 36–423 (DNIKGGEKAQ…TETVVEQIIR (388 aa)) constitute a Helicase ATP-binding domain. 49–56 (GATGTGKT) lines the ATP pocket. The Beta-hairpin signature appears at 102–125 (YYDYYQPEAYVPSSDTYIEKDSSI). One can recognise a Helicase C-terminal domain in the interval 440-606 (QMDDLLGEIN…TIKKEIRDLI (167 aa)). The UVR domain maps to 632–667 (QEAIKKLQKQMHEAAELLDFELAAQIRDMVLELKSM).

Belongs to the UvrB family. Forms a heterotetramer with UvrA during the search for lesions. Interacts with UvrC in an incision complex.

The protein resides in the cytoplasm. Functionally, the UvrABC repair system catalyzes the recognition and processing of DNA lesions. A damage recognition complex composed of 2 UvrA and 2 UvrB subunits scans DNA for abnormalities. Upon binding of the UvrA(2)B(2) complex to a putative damaged site, the DNA wraps around one UvrB monomer. DNA wrap is dependent on ATP binding by UvrB and probably causes local melting of the DNA helix, facilitating insertion of UvrB beta-hairpin between the DNA strands. Then UvrB probes one DNA strand for the presence of a lesion. If a lesion is found the UvrA subunits dissociate and the UvrB-DNA preincision complex is formed. This complex is subsequently bound by UvrC and the second UvrB is released. If no lesion is found, the DNA wraps around the other UvrB subunit that will check the other stand for damage. The polypeptide is UvrABC system protein B (Streptococcus thermophilus (strain CNRZ 1066)).